Reading from the N-terminus, the 3432-residue chain is Hybrid signal transduction histidine kinase G (3432 aa).

Low complexity-rich tracts occupy residues 44–68, 76–90, and 126–145; these read HFSN…TTTN, SQLQ…QQNN, and QPQQ…SQKQ. 2 disordered regions span residues 44-109 and 124-240; these read HFSN…TNSS and DDQP…HNIN. Residues 146-157 show a composition bias toward polar residues; sequence TSQLNISGNNSG. Composition is skewed to low complexity over residues 165 to 177 and 187 to 238; these read TISN…NFIH and KTPI…NNHN. The Protein kinase domain occupies 263-792; that stretch reads LSFKHGYNSG…YGLKKDLEMF (530 aa). Residues 269–277 and Lys305 contribute to the ATP site; that span reads YNSGLGGNF. A compositionally biased stretch (low complexity) spans 399-419; sequence NNNNNNNNSYNNNYNNNNNNN. 2 disordered regions span residues 399–426 and 443–542; these read NNNN…TSPI and FQLN…STPL. The segment covering 443 to 467 has biased composition (polar residues); the sequence is FQLNSSTNSTGSPLIITSQPMPFQL. The segment covering 468 to 479 has biased composition (low complexity); that stretch reads NSNSNTTASSSS. The span at 480-490 shows a compositional bias: polar residues; sequence PITHSNLNTAI. Residues 491–508 are compositionally biased toward low complexity; sequence TSTTTSNSNSNNNSNNNN. Residues 509-525 show a composition bias toward gly residues; that stretch reads SGGGGGGGGGGGGGGGT. The active-site Proton acceptor; for protein kinase activity is the Asp585. Residues 863–1121 form an AAA region; that stretch reads GKEFIIVSGL…TMKIVLKNLD (259 aa). ATP is bound at residue 871-878; it reads GLSGVGKT. 2 disordered regions span residues 1040 to 1077 and 1261 to 1290; these read NNFS…NNNI and TTTT…NNSD. The segment covering 1261–1288 has biased composition (low complexity); sequence TTTTNNNTTNNTNNNNTNNNNNNTNGNN. 2 helical membrane-spanning segments follow: residues 1567 to 1587 and 1599 to 1619; these read VMVI…TLLL and ISSW…IGHF. Residues 1965–1998 form a TPR repeat; it reads SQLMLAKAEFERINGNFEQAMEYFSEAISLAQQF. Disordered stretches follow at residues 2071–2095 and 2299–2349; these read EYSN…QASI and GYNN…NNNK. Over residues 2073-2095 the composition is skewed to low complexity; it reads SNNNNNNNSNNNNNNANQSQASI. One can recognise a GAF domain in the interval 2215–2465; that stretch reads YFDRLLKRLM…SNARLFIKVN (251 aa). In terms of domain architecture, Histidine kinase spans 2491–2769; the sequence is NMSHEMRTPL…TFHFCVELGK (279 aa). At His2494 the chain carries Phosphohistidine; by autocatalysis. A compositionally biased stretch (low complexity) spans 2637–2648; sequence TTTNNKKQLNTD. Disordered regions lie at residues 2637 to 2673, 2785 to 2815, 2917 to 3030, 3134 to 3160, and 3247 to 3281; these read TTTN…SIDL, LLNN…NNNN, LSPK…NNNS, NNNI…HSQY, and NSIS…TITT. Residues 2649–2673 are compositionally biased toward acidic residues; it reads NDGDDDDDDDNENLDENNEDTSIDL. Composition is skewed to low complexity over residues 2787-2815, 2935-3029, and 3134-3145; these read NNNN…NNNN, LSSS…HNNN, and NNNINNINNNNN. One can recognise a Response regulatory domain in the interval 3305–3424; the sequence is KILIVEDNEM…DLRYVINRYG (120 aa). Residue Asp3356 is modified to 4-aspartylphosphate.

This sequence belongs to the protein kinase superfamily. Ser/Thr protein kinase family. Activation probably requires transfer of a phosphate group between a histidine in the kinase core (transmitter) domain and an aspartate of the receiver domain.

Its subcellular location is the membrane. The catalysed reaction is ATP + protein L-histidine = ADP + protein N-phospho-L-histidine.. It catalyses the reaction L-seryl-[protein] + ATP = O-phospho-L-seryl-[protein] + ADP + H(+). The enzyme catalyses L-threonyl-[protein] + ATP = O-phospho-L-threonyl-[protein] + ADP + H(+). Acts as a receptor histidine kinase for a signal transduction pathway. This protein undergoes an ATP-dependent autophosphorylation at a conserved histidine residue in the kinase core, and a phosphoryl group is then transferred to a conserved aspartate residue in the receiver domain. The sequence is that of Hybrid signal transduction histidine kinase G (dhkG) from Dictyostelium discoideum (Social amoeba).